Consider the following 135-residue polypeptide: Thioredoxin H5 (135 aa).

The Thioredoxin domain maps to 13 to 128 (EHLDYSGGNV…LQEKFEQLNR (116 aa)). Catalysis depends on nucleophile residues Cys54 and Cys57. Cys54 and Cys57 are oxidised to a cystine.

This sequence belongs to the thioredoxin family. Plant H-type subfamily.

The protein localises to the cytoplasm. Probable thiol-disulfide oxidoreductase that may be involved in the redox regulation of a number of cytosolic enzymes. In Oryza sativa subsp. japonica (Rice), this protein is Thioredoxin H5.